A 273-amino-acid chain; its full sequence is Rhamnulose-1-phosphate aldolase (273 aa).

Glu117 is an active-site residue. 3 residues coordinate Zn(2+): His140, His142, and His211.

This sequence belongs to the aldolase class II family. RhaD subfamily. Requires Zn(2+) as cofactor.

It is found in the cytoplasm. The catalysed reaction is L-rhamnulose 1-phosphate = (S)-lactaldehyde + dihydroxyacetone phosphate. It participates in carbohydrate degradation; L-rhamnose degradation; glycerone phosphate from L-rhamnose: step 3/3. Its function is as follows. Catalyzes the reversible cleavage of L-rhamnulose-1-phosphate to dihydroxyacetone phosphate (DHAP) and L-lactaldehyde. The chain is Rhamnulose-1-phosphate aldolase from Listeria monocytogenes serotype 4b (strain CLIP80459).